We begin with the raw amino-acid sequence, 287 residues long: Nucleotide-binding protein Ajs_0902 (287 aa).

Residue 10–17 (GMSGSGKS) participates in ATP binding. GTP is bound at residue 59 to 62 (DVRS).

It belongs to the RapZ-like family.

Functionally, displays ATPase and GTPase activities. This Acidovorax sp. (strain JS42) protein is Nucleotide-binding protein Ajs_0902.